A 165-amino-acid polypeptide reads, in one-letter code: Protein SprT (165 aa).

The 145-residue stretch at 19–163 (REKLAQANLK…RCVKCGEPLV (145 aa)) folds into the SprT-like domain. Residue H78 participates in Zn(2+) binding. Residue E79 is part of the active site. H82 lines the Zn(2+) pocket.

The protein belongs to the SprT family. Requires Zn(2+) as cofactor.

Its subcellular location is the cytoplasm. The protein is Protein SprT of Enterobacter sp. (strain 638).